Reading from the N-terminus, the 502-residue chain is ATP synthase subunit alpha (502 aa).

Position 169-176 (169-176 (GDRQTGKT)) interacts with ATP.

The protein belongs to the ATPase alpha/beta chains family. F-type ATPases have 2 components, CF(1) - the catalytic core - and CF(0) - the membrane proton channel. CF(1) has five subunits: alpha(3), beta(3), gamma(1), delta(1), epsilon(1). CF(0) has three main subunits: a(1), b(2) and c(9-12). The alpha and beta chains form an alternating ring which encloses part of the gamma chain. CF(1) is attached to CF(0) by a central stalk formed by the gamma and epsilon chains, while a peripheral stalk is formed by the delta and b chains.

It localises to the cell membrane. The catalysed reaction is ATP + H2O + 4 H(+)(in) = ADP + phosphate + 5 H(+)(out). Its function is as follows. Produces ATP from ADP in the presence of a proton gradient across the membrane. The alpha chain is a regulatory subunit. This chain is ATP synthase subunit alpha, found in Staphylococcus aureus (strain bovine RF122 / ET3-1).